We begin with the raw amino-acid sequence, 159 residues long: Phosphopantetheine adenylyltransferase (159 aa).

Residue Thr10 coordinates substrate. ATP is bound by residues Thr10–Phe11 and His18. Positions 42, 74, and 88 each coordinate substrate. Residues Gly89–Arg91, Glu99, and Trp124–Ser130 each bind ATP.

The protein belongs to the bacterial CoaD family. Homohexamer. It depends on Mg(2+) as a cofactor.

The protein localises to the cytoplasm. It carries out the reaction (R)-4'-phosphopantetheine + ATP + H(+) = 3'-dephospho-CoA + diphosphate. Its pathway is cofactor biosynthesis; coenzyme A biosynthesis; CoA from (R)-pantothenate: step 4/5. Its function is as follows. Reversibly transfers an adenylyl group from ATP to 4'-phosphopantetheine, yielding dephospho-CoA (dPCoA) and pyrophosphate. The protein is Phosphopantetheine adenylyltransferase of Escherichia fergusonii (strain ATCC 35469 / DSM 13698 / CCUG 18766 / IAM 14443 / JCM 21226 / LMG 7866 / NBRC 102419 / NCTC 12128 / CDC 0568-73).